Reading from the N-terminus, the 207-residue chain is Small ribosomal subunit protein uS4 (207 aa).

The segment at 31 to 55 is disordered; sequence KCKLDSKPGQHGRTSGARTSDYGTQ. A compositionally biased stretch (polar residues) spans 42-53; it reads GRTSGARTSDYG. An S4 RNA-binding domain is found at 97–157; sequence SRLDNVVYRM…EQKKKQARIL (61 aa).

Belongs to the universal ribosomal protein uS4 family. As to quaternary structure, part of the 30S ribosomal subunit. Contacts protein S5. The interaction surface between S4 and S5 is involved in control of translational fidelity.

In terms of biological role, one of the primary rRNA binding proteins, it binds directly to 16S rRNA where it nucleates assembly of the body of the 30S subunit. Its function is as follows. With S5 and S12 plays an important role in translational accuracy. The polypeptide is Small ribosomal subunit protein uS4 (Paraburkholderia xenovorans (strain LB400)).